The sequence spans 226 residues: PKHD-type hydroxylase PLES_48951 (226 aa).

Residues 78–178 form the Fe2OG dioxygenase domain; sequence KVFPPLFNCY…RYASFFWTQS (101 aa). Fe cation-binding residues include His96, Asp98, and His159. Arg169 lines the 2-oxoglutarate pocket.

Fe(2+) is required as a cofactor. L-ascorbate serves as cofactor.

This is PKHD-type hydroxylase PLES_48951 from Pseudomonas aeruginosa (strain LESB58).